The following is a 43-amino-acid chain: U5-hexatoxin-Mr1a (43 aa).

Intrachain disulfides connect C1–C16, C8–C21, C15–C36, and C17–C43.

It belongs to the neurotoxin 35 family. Contains 4 disulfide bonds. Expressed by the venom gland.

Its subcellular location is the secreted. Functionally, this toxin blocks the neuromuscular transmission, and also acts on muscle. It exerts an effect of first exciting and then inhibiting the contraction of muscle. This toxin is active only against mammals. The protein is U5-hexatoxin-Mr1a of Macrothele raveni (Funnel-web spider).